Consider the following 283-residue polypeptide: UPF0273 protein STK_18300 (283 aa).

Residues 4 to 249 (LRVRTYIPGF…YLRITNVKAE (246 aa)) enclose the KaiC domain. Position 31–38 (31–38 (GGPGTGKS)) interacts with ATP. The interval 261–283 (MKKAVEESEEEKESIQEAEIEEE) is disordered. Over residues 267–283 (ESEEEKESIQEAEIEEE) the composition is skewed to acidic residues.

The protein belongs to the UPF0273 family.

In Sulfurisphaera tokodaii (strain DSM 16993 / JCM 10545 / NBRC 100140 / 7) (Sulfolobus tokodaii), this protein is UPF0273 protein STK_18300.